A 462-amino-acid chain; its full sequence is Glycoprotein endo-alpha-1,2-mannosidase (462 aa).

Residues Met-1–Thr-8 are Cytoplasmic-facing. A helical; Signal-anchor for type II membrane protein transmembrane segment spans residues Cys-9–Leu-29. The Lumenal portion of the chain corresponds to Arg-30–Ser-462. Residues Asp-60–Ser-462 are catalytic.

This sequence belongs to the glycosyl hydrolase 99 family. In terms of processing, undergoes proteolytic cleavage in the C-terminal region.

The protein localises to the golgi apparatus membrane. It carries out the reaction N-{alpha-Glc-(1-&gt;3)-alpha-Man-(1-&gt;2)-alpha-Man-(1-&gt;2)-alpha-Man-(1-&gt;3)-[alpha-Man-(1-&gt;2)-alpha-Man-(1-&gt;3)-[alpha-Man-(1-&gt;2)-alpha-Man-(1-&gt;6)]-alpha-Man-(1-&gt;6)]-beta-Man-(1-&gt;4)-beta-GlcNAc-(1-&gt;4)-beta-GlcNAc}-L-asparaginyl-[protein] + H2O = alpha-D-glucosyl-(1-&gt;3)-D-mannopyranose + N(4)-{alpha-D-Man-(1-&gt;2)-alpha-D-Man-(1-&gt;3)-[alpha-D-Man-(1-&gt;2)-alpha-D-Man-(1-&gt;3)-[alpha-D-Man-(1-&gt;2)-alpha-D-Man-(1-&gt;6)]-alpha-D-Man-(1-&gt;6)]-beta-D-Man-(1-&gt;4)-beta-D-GlaNAc-(1-&gt;4)-beta-D-GlcNAc}-L-asparaginyl-[protein] (N-glucan mannose isomer 8A1,2,3B1,2). The protein is Glycoprotein endo-alpha-1,2-mannosidase (MANEA) of Pongo abelii (Sumatran orangutan).